Reading from the N-terminus, the 368-residue chain is Cytochrome P450 119 (368 aa).

6 residues coordinate heme: H76, R80, T257, R259, H315, and C317.

This sequence belongs to the cytochrome P450 family. Requires heme as cofactor.

It localises to the cytoplasm. The enzyme catalyses 2 a phenolic donor + H2O2 = 2 a phenolic radical donor + 2 H2O. In terms of biological role, the endogenous substrate is not known. In vitro, catalyzes the H(2)O(2)-dependent epoxidation of styrene, cis-beta-methylstyrene, and cis-stilbene with retention of stereochemistry. Is able to use cumene hydroperoxide (CHP) or tert-butyl hydroperoxide (TBHP) instead of H(2)O(2) as the electron acceptor. Can also hydroxylate fatty acids such as lauric acid. The protein is Cytochrome P450 119 (cyp119) of Sulfolobus acidocaldarius (strain ATCC 33909 / DSM 639 / JCM 8929 / NBRC 15157 / NCIMB 11770).